The chain runs to 316 residues: Endochitinase 2 (316 aa).

The first 18 residues, glutamate 1 to alanine 18, serve as a signal peptide directing secretion. The Chitin-binding type-1 domain maps to glutamate 19–glycine 60. 7 disulfide bridges follow: cysteine 21–cysteine 36, cysteine 30–cysteine 42, cysteine 35–cysteine 49, cysteine 54–cysteine 58, cysteine 87–cysteine 150, cysteine 162–cysteine 170, and cysteine 269–cysteine 301. The Proton donor role is filled by glutamate 132. The propeptide at glycine 310–valine 316 is removed in mature form, vacuolar targeting.

This sequence belongs to the glycosyl hydrolase 19 family. Chitinase class I subfamily.

It localises to the vacuole. The catalysed reaction is Random endo-hydrolysis of N-acetyl-beta-D-glucosaminide (1-&gt;4)-beta-linkages in chitin and chitodextrins.. In terms of biological role, defense against chitin-containing fungal pathogens. In Solanum tuberosum (Potato), this protein is Endochitinase 2 (CHTB2).